The chain runs to 96 residues: UPF0235 protein Shewmr4_1190 (96 aa).

Belongs to the UPF0235 family.

This is UPF0235 protein Shewmr4_1190 from Shewanella sp. (strain MR-4).